Consider the following 556-residue polypeptide: 2-methylpropanoate--CoA ligase CCL4 (556 aa).

Residues 192-200, 325-330, D423, 435-438, and K531 each bind ATP; these read TSGTTSSPK, HGYGLT, and IKDR. The SBD1 stretch occupies residues 260–325; the sequence is DSEIIYDMIK…TESLGFAVSH (66 aa). The segment at 326 to 402 is SBD2; the sequence is GYGLTETAGL…LRGGSVMLGY (77 aa).

Belongs to the ATP-dependent AMP-binding enzyme family. As to expression, mostly expressed in old leaves and in cones and glandular trichomes (lupulin glands) after flowering, and, to a lower extent, in stems, young leaves and flowers.

The protein localises to the cytoplasm. It is found in the cytosol. The enzyme catalyses 2-methylpropanoate + ATP + CoA = 2-methylpropanoyl-CoA + AMP + diphosphate. The catalysed reaction is propanoate + ATP + CoA = propanoyl-CoA + AMP + diphosphate. It carries out the reaction butanoate + ATP + CoA = butanoyl-CoA + AMP + diphosphate. It catalyses the reaction 2-methylbutanoate + ATP + CoA = 2-methylbutanoyl-CoA + AMP + diphosphate. It functions in the pathway secondary metabolite biosynthesis. In terms of biological role, involved in the biosynthesis of prenylated phenolics natural products which contribute to the bitter taste of beer and display broad biological activities. Catalyzes the ligation of CoA on 2-methylpropanoate (isobutyric acid) and 2-methylbutanoate to produce 2-methylpropanoyl-CoA and 2-methylbutanoyl-CoA, respectively. Can also use propanoate and butanoate as substrates with a lower efficiency. This Humulus lupulus (European hop) protein is 2-methylpropanoate--CoA ligase CCL4.